The chain runs to 387 residues: Phosphoglycerate kinase (387 aa).

Substrate-binding positions include 21-23 (DLN), Arg36, 59-62 (HLGR), Arg113, and Arg146. Residues Lys197, Glu314, and 340–343 (GGDT) contribute to the ATP site.

The protein belongs to the phosphoglycerate kinase family. In terms of assembly, monomer.

It localises to the cytoplasm. The catalysed reaction is (2R)-3-phosphoglycerate + ATP = (2R)-3-phospho-glyceroyl phosphate + ADP. It participates in carbohydrate degradation; glycolysis; pyruvate from D-glyceraldehyde 3-phosphate: step 2/5. This is Phosphoglycerate kinase from Pseudomonas savastanoi pv. phaseolicola (strain 1448A / Race 6) (Pseudomonas syringae pv. phaseolicola (strain 1448A / Race 6)).